The primary structure comprises 225 residues: UPF0758 protein Ping_0056 (225 aa).

An MPN domain is found at 103 to 225 (ALTSAAQTKA…CTSFAENGWI (123 aa)). Residues histidine 174, histidine 176, and aspartate 187 each coordinate Zn(2+). The JAMM motif motif lies at 174–187 (HNHPSGDPSASEAD).

It belongs to the UPF0758 family.

The protein is UPF0758 protein Ping_0056 of Psychromonas ingrahamii (strain DSM 17664 / CCUG 51855 / 37).